We begin with the raw amino-acid sequence, 507 residues long: Probable Xaa-Pro aminopeptidase HCAG_02413 (507 aa).

D283, D294, E431, and E469 together coordinate Mn(2+).

It belongs to the peptidase M24B family. Mn(2+) is required as a cofactor.

It catalyses the reaction Release of any N-terminal amino acid, including proline, that is linked to proline, even from a dipeptide or tripeptide.. In terms of biological role, catalyzes the removal of a penultimate prolyl residue from the N-termini of peptides. This Ajellomyces capsulatus (strain NAm1 / WU24) (Darling's disease fungus) protein is Probable Xaa-Pro aminopeptidase HCAG_02413.